The primary structure comprises 451 residues: Tubulin alpha chain (451 aa).

Position 11 (Gln-11) interacts with GTP. An N6-acetyllysine modification is found at Lys-40. GTP is bound by residues Glu-71, Gly-144, Thr-145, Thr-179, Asn-206, and Asn-228. Glu-71 serves as a coordination point for Mg(2+). The active site involves Glu-254.

The protein belongs to the tubulin family. As to quaternary structure, dimer of alpha and beta chains. A typical microtubule is a hollow water-filled tube with an outer diameter of 25 nm and an inner diameter of 15 nM. Alpha-beta heterodimers associate head-to-tail to form protofilaments running lengthwise along the microtubule wall with the beta-tubulin subunit facing the microtubule plus end conferring a structural polarity. Microtubules usually have 13 protofilaments but different protofilament numbers can be found in some organisms and specialized cells. Mg(2+) is required as a cofactor. Undergoes a tyrosination/detyrosination cycle, the cyclic removal and re-addition of a C-terminal tyrosine residue by the enzymes tubulin tyrosine carboxypeptidase (TTCP) and tubulin tyrosine ligase (TTL), respectively. In terms of processing, acetylation of alpha chains at Lys-40 stabilizes microtubules and affects affinity and processivity of microtubule motors. This modification has a role in multiple cellular functions, ranging from cell motility, cell cycle progression or cell differentiation to intracellular trafficking and signaling.

The protein resides in the cytoplasm. It localises to the cytoskeleton. The enzyme catalyses GTP + H2O = GDP + phosphate + H(+). Its function is as follows. Tubulin is the major constituent of microtubules, a cylinder consisting of laterally associated linear protofilaments composed of alpha- and beta-tubulin heterodimers. Microtubules grow by the addition of GTP-tubulin dimers to the microtubule end, where a stabilizing cap forms. Below the cap, tubulin dimers are in GDP-bound state, owing to GTPase activity of alpha-tubulin. The sequence is that of Tubulin alpha chain (TUBA) from Euglena gracilis.